A 425-amino-acid polypeptide reads, in one-letter code: 3-isopropylmalate dehydratase large subunit (425 aa).

[4Fe-4S] cluster is bound by residues cysteine 306, cysteine 366, and cysteine 369.

This sequence belongs to the aconitase/IPM isomerase family. LeuC type 2 subfamily. As to quaternary structure, heterodimer of LeuC and LeuD. It depends on [4Fe-4S] cluster as a cofactor.

The enzyme catalyses (2R,3S)-3-isopropylmalate = (2S)-2-isopropylmalate. Its pathway is amino-acid biosynthesis; L-leucine biosynthesis; L-leucine from 3-methyl-2-oxobutanoate: step 2/4. In terms of biological role, catalyzes the isomerization between 2-isopropylmalate and 3-isopropylmalate, via the formation of 2-isopropylmaleate. This Nautilia profundicola (strain ATCC BAA-1463 / DSM 18972 / AmH) protein is 3-isopropylmalate dehydratase large subunit.